A 231-amino-acid polypeptide reads, in one-letter code: Deoxyribose-phosphate aldolase (231 aa).

Catalysis depends on Asp97, which acts as the Proton donor/acceptor. The active-site Schiff-base intermediate with acetaldehyde is the Lys162. The Proton donor/acceptor role is filled by Lys191.

This sequence belongs to the DeoC/FbaB aldolase family. DeoC type 1 subfamily.

The protein localises to the cytoplasm. The catalysed reaction is 2-deoxy-D-ribose 5-phosphate = D-glyceraldehyde 3-phosphate + acetaldehyde. It functions in the pathway carbohydrate degradation; 2-deoxy-D-ribose 1-phosphate degradation; D-glyceraldehyde 3-phosphate and acetaldehyde from 2-deoxy-alpha-D-ribose 1-phosphate: step 2/2. Functionally, catalyzes a reversible aldol reaction between acetaldehyde and D-glyceraldehyde 3-phosphate to generate 2-deoxy-D-ribose 5-phosphate. This is Deoxyribose-phosphate aldolase from Caldanaerobacter subterraneus subsp. tengcongensis (strain DSM 15242 / JCM 11007 / NBRC 100824 / MB4) (Thermoanaerobacter tengcongensis).